A 38-amino-acid polypeptide reads, in one-letter code: Photosystem II reaction center protein L (38 aa).

The chain crosses the membrane as a helical span at residues 17–37 (SLYWGLLLIFVLAVSFSNYFF).

This sequence belongs to the PsbL family. As to quaternary structure, PSII is composed of 1 copy each of membrane proteins PsbA, PsbB, PsbC, PsbD, PsbE, PsbF, PsbH, PsbI, PsbJ, PsbK, PsbL, PsbM, PsbT, PsbX, PsbY, PsbZ, Psb30/Ycf12, at least 3 peripheral proteins of the oxygen-evolving complex and a large number of cofactors. It forms dimeric complexes.

The protein localises to the plastid membrane. In terms of biological role, one of the components of the core complex of photosystem II (PSII). PSII is a light-driven water:plastoquinone oxidoreductase that uses light energy to abstract electrons from H(2)O, generating O(2) and a proton gradient subsequently used for ATP formation. It consists of a core antenna complex that captures photons, and an electron transfer chain that converts photonic excitation into a charge separation. This subunit is found at the monomer-monomer interface and is required for correct PSII assembly and/or dimerization. The protein is Photosystem II reaction center protein L of Aneura mirabilis (Parasitic liverwort).